A 269-amino-acid polypeptide reads, in one-letter code: Expansin-B9 (269 aa).

Residues 1-24 (MGSLTTNIVLAVAVVAALVGGGSC) form the signal peptide. N-linked (GlcNAc...) asparagine glycosylation is present at Asn34. Positions 63-169 (GGACGIKNVN…RRVRCKYPGG (107 aa)) constitute an Expansin-like EG45 domain. Cystine bridges form between Cys66–Cys94, Cys97–Cys164, and Cys102–Cys108. Residues 183–264 (NYLAVLVKFV…NWMPDAIYVS (82 aa)) enclose the Expansin-like CBD domain.

It belongs to the expansin family. Expansin B subfamily.

It localises to the secreted. The protein resides in the cell wall. The protein localises to the membrane. Its function is as follows. May cause loosening and extension of plant cell walls by disrupting non-covalent bonding between cellulose microfibrils and matrix glucans. No enzymatic activity has been found. May be required for rapid internodal elongation in deepwater rice during submergence. This Oryza sativa subsp. japonica (Rice) protein is Expansin-B9 (EXPB9).